The primary structure comprises 1362 residues: ATP-dependent RNA helicase dhx29 (1362 aa).

Basic residues predominate over residues 1 to 10 (MGGKNKKNRH). The disordered stretch occupies residues 1–76 (MGGKNKKNRH…FASSSDSGVS (76 aa)). The span at 18 to 27 (GATAAANRPR) shows a compositional bias: low complexity. A compositionally biased stretch (basic and acidic residues) spans 28 to 41 (AAAEPRPGGEDAAK). Positions 66–76 (SFASSSDSGVS) are enriched in low complexity. A coiled-coil region spans residues 89–109 (EAKLEKRIISLINEHKKLNSN). Disordered stretches follow at residues 182–215 (QRARAKFQAPPQRPSAANESATEKGEEGASLKGN) and 229–257 (EQGSDDDDDDDDVKEEEKETTLEKFDPNE). The segment covering 231 to 242 (GSDDDDDDDDVK) has biased composition (acidic residues). Over residues 243 to 257 (EEEKETTLEKFDPNE) the composition is skewed to basic and acidic residues. A coiled-coil region spans residues 285 to 305 (QKEAQERIRGYQQEMKSLEDH). The segment at 317–336 (VKSESKQPKPALPPSEDEPL) is disordered. The Helicase ATP-binding domain occupies 576-749 (LETLKRHRVI…FTHCPIIRIS (174 aa)). Position 589–596 (589–596 (GETGSGKS)) interacts with ATP. Residues 696 to 699 (DEVH) carry the DEAH box motif. The region spanning 852 to 1021 (DISPEYRNVE…ELCLHIMKCD (170 aa)) is the Helicase C-terminal domain.

This sequence belongs to the DEAD box helicase family. DEAH subfamily. As to quaternary structure, part of the 43S pre-initiation complex (PIC).

Its subcellular location is the cytoplasm. It carries out the reaction ATP + H2O = ADP + phosphate + H(+). In terms of biological role, ATP-binding RNA helicase involved in translation initiation. Part of the 43S pre-initiation complex that is required for efficient initiation on mRNAs of higher eukaryotes with structured 5'-UTRs by promoting efficient NTPase-dependent 48S complex formation. Specifically binds to the 40S ribosome near the mRNA entrance. Does not possess a processive helicase activity. The chain is ATP-dependent RNA helicase dhx29 from Xenopus laevis (African clawed frog).